Reading from the N-terminus, the 658-residue chain is Translation factor GUF1, mitochondrial (658 aa).

The transit peptide at 1 to 40 (MRGCLQTVRWLTSAWQRPRSYSPLSRAAPCRFFNVSIPRN) directs the protein to the mitochondrion. A tr-type G domain is found at 60-240 (DRFRNFCIVA…TVVEQIPAPV (181 aa)). Residues 69 to 76 (AHVDHGKS), 133 to 137 (DTPGH), and 187 to 190 (NKVD) contribute to the GTP site.

This sequence belongs to the TRAFAC class translation factor GTPase superfamily. Classic translation factor GTPase family. LepA subfamily.

Its subcellular location is the mitochondrion inner membrane. It carries out the reaction GTP + H2O = GDP + phosphate + H(+). Functionally, promotes mitochondrial protein synthesis. May act as a fidelity factor of the translation reaction, by catalyzing a one-codon backward translocation of tRNAs on improperly translocated ribosomes. Binds to mitochondrial ribosomes in a GTP-dependent manner. The chain is Translation factor GUF1, mitochondrial from Paracoccidioides lutzii (strain ATCC MYA-826 / Pb01) (Paracoccidioides brasiliensis).